Reading from the N-terminus, the 209-residue chain is Protein lin-28 homolog A (209 aa).

The interval 1 to 31 (MGSVSNQQFAGGCAKAAEKAPEEAPPDAARA) is disordered. The residue at position 2 (Gly-2) is an N-acetylglycine. Position 3 is a phosphoserine (Ser-3). The 74-residue stretch at 39-112 (HGAGICKWFN…GLESIRVTGP (74 aa)) folds into the CSD domain. The interval 113–136 (GGVFCIGSERRPKGKNMQKRRSKG) is flexible linker. Ser-120 carries the phosphoserine modification. CCHC-type zinc fingers lie at residues 137–154 (DRCY…ECKL) and 159–176 (KKCH…SCPL). Positions 177–209 (KAQQGPSSQGKPAYFREEEEEIHSPALLPEAQN) are disordered. Ser-200 is subject to Phosphoserine.

It belongs to the lin-28 family. Monomer. During skeletal muscle differentiation, associated with translation initiation complexes in the polysomal compartment. Directly interacts with EIF3S2. Interacts with NCL in an RNA-dependent manner. Interacts with TUT4 in the presence of pre-let-7 RNA. As to expression, expressed in embryonic stem cells (ES cells), spermatagonia and testis. Expressed in numerous epithelial tissues including the epithelia of the small intestine, the intralobular duct epithelium of the mammary gland and the epithelia of Henle's loop in the kidney and in the collecting duct (at protein level). Also expressed in the myocardium and skeletal muscle (at protein level).

It localises to the cytoplasm. The protein resides in the rough endoplasmic reticulum. It is found in the P-body. The protein localises to the stress granule. Its subcellular location is the nucleus. It localises to the nucleolus. Its function is as follows. RNA-binding protein that inhibits processing of pre-let-7 miRNAs and regulates translation of mRNAs that control developmental timing, pluripotency and metabolism. Seems to recognize a common structural G-quartet (G4) feature in its miRNA and mRNA targets. 'Translational enhancer' that drives specific mRNAs to polysomes and increases the efficiency of protein synthesis. Its association with the translational machinery and target mRNAs results in an increased number of initiation events per molecule of mRNA and, indirectly, in mRNA stabilization. Binds IGF2 mRNA, MYOD1 mRNA, ARBP/36B4 ribosomal protein mRNA and its own mRNA. Essential for skeletal muscle differentiation program through the translational up-regulation of IGF2 expression. Suppressor of microRNA (miRNA) biogenesis, including that of let-7, miR107, miR-143 and miR-200c. Specifically binds the miRNA precursors (pre-miRNAs), recognizing an 5'-GGAG-3' motif found in pre-miRNA terminal loop, and recruits TUT4 and TUT7 uridylyltransferaseS. This results in the terminal uridylation of target pre-miRNAs. Uridylated pre-miRNAs fail to be processed by Dicer and undergo degradation. The repression of let-7 expression is required for normal development and contributes to maintain the pluripotent state by preventing let-7-mediated differentiation of embryonic stem cells. Localized to the periendoplasmic reticulum area, binds to a large number of spliced mRNAs and inhibits the translation of mRNAs destined for the ER, reducing the synthesis of transmembrane proteins, ER or Golgi lumen proteins, and secretory proteins. Binds to and enhances the translation of mRNAs for several metabolic enzymes, such as PFKP, PDHA1 or SDHA, increasing glycolysis and oxidative phosphorylation. Which, with the let-7 repression may enhance tissue repair in adult tissue. This chain is Protein lin-28 homolog A (Lin28a), found in Mus musculus (Mouse).